The sequence spans 361 residues: Ribosomal RNA large subunit methyltransferase M (361 aa).

S-adenosyl-L-methionine is bound by residues Ser187, 220–223 (CPGG), Asp239, Asp259, and Asp276. The Proton acceptor role is filled by Lys305.

Belongs to the class I-like SAM-binding methyltransferase superfamily. RNA methyltransferase RlmE family. RlmM subfamily. In terms of assembly, monomer.

It is found in the cytoplasm. It carries out the reaction cytidine(2498) in 23S rRNA + S-adenosyl-L-methionine = 2'-O-methylcytidine(2498) in 23S rRNA + S-adenosyl-L-homocysteine + H(+). Catalyzes the 2'-O-methylation at nucleotide C2498 in 23S rRNA. This is Ribosomal RNA large subunit methyltransferase M from Shewanella putrefaciens (strain CN-32 / ATCC BAA-453).